The following is an 801-amino-acid chain: tRNA(Met) cytidine acetyltransferase TmcA (801 aa).

ATP contacts are provided by residues Gln228, 256 to 265, and Arg412; that span reads GRGKSSAVGL. The N-acetyltransferase domain occupies 457 to 637; the sequence is EELFLKNEEE…YTVIVVKPLS (181 aa). Residues 562–564, 569–575, and Glu602 contribute to the acetyl-CoA site; these read IAT and MGKGLGS.

It belongs to the RNA cytidine acetyltransferase family. TmcA subfamily.

The protein resides in the cytoplasm. The catalysed reaction is cytidine(34) in elongator tRNA(Met) + acetyl-CoA + ATP + H2O = N(4)-acetylcytidine(34) in elongator tRNA(Met) + ADP + phosphate + CoA + H(+). Functionally, catalyzes the formation of N(4)-acetylcytidine (ac(4)C) at the wobble position of tRNA(Met), by using acetyl-CoA as an acetyl donor and ATP (or GTP). The chain is tRNA(Met) cytidine acetyltransferase TmcA from Thermofilum pendens (strain DSM 2475 / Hrk 5).